Here is a 107-residue protein sequence, read N- to C-terminus: UPF0060 membrane protein glr4174 (107 aa).

4 consecutive transmembrane segments (helical) span residues methionine 1–tryptophan 21, leucine 26–leucine 46, alanine 58–glutamate 78, and leucine 87–proline 107.

This sequence belongs to the UPF0060 family.

It localises to the cell inner membrane. This chain is UPF0060 membrane protein glr4174, found in Gloeobacter violaceus (strain ATCC 29082 / PCC 7421).